The primary structure comprises 271 residues: uncharacterized protein (271 aa).

Belongs to the metallo-dependent hydrolases superfamily. Peptidase M19 family.

This is an uncharacterized protein from Klebsiella pneumoniae.